The primary structure comprises 60 residues: Large ribosomal subunit protein bL32 (60 aa).

The disordered stretch occupies residues 1–47 (MAVQQNRKTRSKRGMRRSHDALTSSTLSTDPTTGEKHRRHHVTADGF). Basic residues predominate over residues 7 to 16 (RKTRSKRGMR).

Belongs to the bacterial ribosomal protein bL32 family.

The chain is Large ribosomal subunit protein bL32 from Teredinibacter turnerae (strain ATCC 39867 / T7901).